Consider the following 61-residue polypeptide: uncharacterized protein (61 aa).

This is an uncharacterized protein from Bacillus subtilis (strain 168).